Here is a 151-residue protein sequence, read N- to C-terminus: Receptor activity-modifying protein 3 (151 aa).

The N-terminal stretch at 1 to 30 (MEATAPRRRHLLPLLLLLLLLCGECPPVSG) is a signal peptide. Residues 31–116 (CNEKRMLAML…CSVDRQQWQD (86 aa)) lie on the Extracellular side of the membrane. Cystine bridges form between Cys-43-Cys-75 and Cys-60-Cys-107. N-linked (GlcNAc...) asparagine glycans are attached at residues Asn-61 and Asn-106. The helical transmembrane segment at 117 to 141 (PPDEILIPLIVVPILLTLAMTGLVV) threads the bilayer. Over 142 to 151 (WRSKRAAQVV) the chain is Cytoplasmic.

Belongs to the RAMP family. In terms of assembly, heterodimer of CALCRL and RAMP3; interaction induces allosteric modulation of CALCRL function and ligand specificity for adrenomedullin/ADM and intermedin/ADM2. Heterodimer of CALCR and RAMP3; interaction form the receptor complex AMYR3 for amylin/IAPP. Interacts with GPER1.

The protein resides in the cell membrane. Its subcellular location is the membrane. In terms of biological role, accessory protein that interacts with and modulates the function of G-protein coupled receptors including calcitonin gene-related peptide type 1 receptor (CALCRL), calcitonin receptor (CALCR) and G-protein coupled estrogen receptor 1 (GPER1). Required for the transport of CALCRL and GPER1 receptors to the plasma membrane. Plays a role in cardioprotection by reducing cardiac hypertrophy and perivascular fibrosis in a GPER1-dependent manner. Together with CALCRL, form a receptor complex for adrenomedullin/ADM and intermedin/ADM2. Together with CALCR, act as a receptor complex for amylin/IAPP. The sequence is that of Receptor activity-modifying protein 3 (RAMP3) from Sus scrofa (Pig).